The primary structure comprises 167 residues: Biotin carboxyl carrier protein of acetyl-CoA carboxylase (167 aa).

The tract at residues 53 to 91 (SGFSQERPIPTDPKKDTIKETTTENSETSTTTSSGDFIS) is disordered. The span at 64–74 (DPKKDTIKETT) shows a compositional bias: basic and acidic residues. The segment covering 75–86 (TENSETSTTTSS) has biased composition (low complexity). In terms of domain architecture, Biotinyl-binding spans 87-163 (GDFISSPLVG…QFGSKLFRIA (77 aa)). At lysine 129 the chain carries N6-biotinyllysine.

As to quaternary structure, homodimer.

It participates in lipid metabolism; fatty acid biosynthesis. This protein is a component of the acetyl coenzyme A carboxylase complex; first, biotin carboxylase catalyzes the carboxylation of the carrier protein and then the transcarboxylase transfers the carboxyl group to form malonyl-CoA. In Chlamydia pneumoniae (Chlamydophila pneumoniae), this protein is Biotin carboxyl carrier protein of acetyl-CoA carboxylase (accB).